A 114-amino-acid chain; its full sequence is UPF0342 protein NWMN_1737 (114 aa).

This sequence belongs to the UPF0342 family.

In Staphylococcus aureus (strain Newman), this protein is UPF0342 protein NWMN_1737.